Here is a 20-residue protein sequence, read N- to C-terminus: Cytochrome c oxidase subunit 6A1, mitochondrial (20 aa).

Belongs to the cytochrome c oxidase subunit 6A family. As to quaternary structure, component of the cytochrome c oxidase (complex IV, CIV), a multisubunit enzyme composed of 14 subunits. The complex is composed of a catalytic core of 3 subunits MT-CO1, MT-CO2 and MT-CO3, encoded in the mitochondrial DNA, and 11 supernumerary subunits COX4I, COX5A, COX5B, COX6A, COX6B, COX6C, COX7A, COX7B, COX7C, COX8 and NDUFA4, which are encoded in the nuclear genome. The complex exists as a monomer or a dimer and forms supercomplexes (SCs) in the inner mitochondrial membrane with NADH-ubiquinone oxidoreductase (complex I, CI) and ubiquinol-cytochrome c oxidoreductase (cytochrome b-c1 complex, complex III, CIII), resulting in different assemblies (supercomplex SCI(1)III(2)IV(1) and megacomplex MCI(2)III(2)IV(2)). Liver specific isoform.

The protein resides in the mitochondrion inner membrane. Its pathway is energy metabolism; oxidative phosphorylation. Component of the cytochrome c oxidase, the last enzyme in the mitochondrial electron transport chain which drives oxidative phosphorylation. The respiratory chain contains 3 multisubunit complexes succinate dehydrogenase (complex II, CII), ubiquinol-cytochrome c oxidoreductase (cytochrome b-c1 complex, complex III, CIII) and cytochrome c oxidase (complex IV, CIV), that cooperate to transfer electrons derived from NADH and succinate to molecular oxygen, creating an electrochemical gradient over the inner membrane that drives transmembrane transport and the ATP synthase. Cytochrome c oxidase is the component of the respiratory chain that catalyzes the reduction of oxygen to water. Electrons originating from reduced cytochrome c in the intermembrane space (IMS) are transferred via the dinuclear copper A center (CU(A)) of subunit 2 and heme A of subunit 1 to the active site in subunit 1, a binuclear center (BNC) formed by heme A3 and copper B (CU(B)). The BNC reduces molecular oxygen to 2 water molecules unsing 4 electrons from cytochrome c in the IMS and 4 protons from the mitochondrial matrix. The sequence is that of Cytochrome c oxidase subunit 6A1, mitochondrial (COX6A1) from Canis lupus familiaris (Dog).